The following is an 81-amino-acid chain: Sulfur carrier protein TusA (81 aa).

Cys-19 (cysteine persulfide intermediate) is an active-site residue.

Belongs to the sulfur carrier protein TusA family. Interacts with IscS.

It localises to the cytoplasm. Its pathway is tRNA modification. Sulfur carrier protein involved in sulfur trafficking in the cell. Part of a sulfur-relay system required for 2-thiolation during synthesis of 2-thiouridine of the modified wobble base 5-methylaminomethyl-2-thiouridine (mnm(5)s(2)U) in tRNA. Interacts with IscS and stimulates its cysteine desulfurase activity. Accepts an activated sulfur from IscS, which is then transferred to TusD, and thus determines the direction of sulfur flow from IscS to 2-thiouridine formation. Also appears to be involved in sulfur transfer for the biosynthesis of molybdopterin. In Escherichia coli (strain SMS-3-5 / SECEC), this protein is Sulfur carrier protein TusA.